We begin with the raw amino-acid sequence, 350 residues long: Patr class I histocompatibility antigen, alpha chain E (350 aa).

The signal sequence occupies residues 1-21; it reads MVDGTLLLLLSEALALTQTWA. The tract at residues 22–111 is alpha-1; it reads GSHSLKYFHT…LRGYYNQSEA (90 aa). Residues 22–305 lie on the Extracellular side of the membrane; it reads GSHSLKYFHT…KPASQPTIPI (284 aa). Residue N107 is glycosylated (N-linked (GlcNAc...) asparagine). The tract at residues 112 to 203 is alpha-2; it reads GSHTLQWMHG…EKGKETLLHL (92 aa). 2 disulfide bridges follow: C122–C185 and C224–C280. The tract at residues 204–295 is alpha-3; that stretch reads EPPKTHVTHH…GLPEPLTLRW (92 aa). The 89-residue stretch at 206–294 folds into the Ig-like C1-type domain; it reads PKTHVTHHPI…EGLPEPLTLR (89 aa). A connecting peptide region spans residues 296–305; it reads KPASQPTIPI. The chain crosses the membrane as a helical span at residues 306–329; that stretch reads VGIIAGLVLLGSVVSGAVVAAVMW. Over 330-350 the chain is Cytoplasmic; it reads RKKSSGGKGRSYSKAEWSDSA.

This sequence belongs to the MHC class I family. As to quaternary structure, heterodimer of an alpha chain and a beta chain (beta-2-microglobulin).

Its subcellular location is the membrane. Preferably binds to a peptide derived from the signal sequence of most HLA-A, -B, -C and -G molecules. The sequence is that of Patr class I histocompatibility antigen, alpha chain E (Patr-E) from Pan troglodytes (Chimpanzee).